The sequence spans 120 residues: Putative gamma-glutamylcyclotransferase MJ1514 (120 aa).

7-10 is a substrate binding site; sequence YGSL. E74 (proton acceptor) is an active-site residue.

Belongs to the gamma-glutamylcyclotransferase family.

Functionally, putative gamma-glutamylcyclotransferase. The protein is Putative gamma-glutamylcyclotransferase MJ1514 of Methanocaldococcus jannaschii (strain ATCC 43067 / DSM 2661 / JAL-1 / JCM 10045 / NBRC 100440) (Methanococcus jannaschii).